We begin with the raw amino-acid sequence, 178 residues long: Large ribosomal subunit protein uL6 (178 aa).

It belongs to the universal ribosomal protein uL6 family. As to quaternary structure, part of the 50S ribosomal subunit.

Functionally, this protein binds to the 23S rRNA, and is important in its secondary structure. It is located near the subunit interface in the base of the L7/L12 stalk, and near the tRNA binding site of the peptidyltransferase center. The protein is Large ribosomal subunit protein uL6 of Helicobacter pylori (strain P12).